The sequence spans 110 residues: Ribonuclease P protein component 1 (110 aa).

The protein belongs to the eukaryotic/archaeal RNase P protein component 1 family. As to quaternary structure, consists of a catalytic RNA component and at least 4-5 protein subunits.

Its subcellular location is the cytoplasm. It carries out the reaction Endonucleolytic cleavage of RNA, removing 5'-extranucleotides from tRNA precursor.. Part of ribonuclease P, a protein complex that generates mature tRNA molecules by cleaving their 5'-ends. The protein is Ribonuclease P protein component 1 of Methanosarcina barkeri (strain Fusaro / DSM 804).